Consider the following 161-residue polypeptide: Putative esterase C31F10.02 (161 aa).

Belongs to the thioesterase PaaI family.

The chain is Putative esterase C31F10.02 from Schizosaccharomyces pombe (strain 972 / ATCC 24843) (Fission yeast).